We begin with the raw amino-acid sequence, 310 residues long: DnaJ-like protein MG002 (310 aa).

The J domain occupies 1-66 (MNLYDLLELP…KEKYDSMLKV (66 aa)).

The chain is DnaJ-like protein MG002 from Mycoplasma genitalium (strain ATCC 33530 / DSM 19775 / NCTC 10195 / G37) (Mycoplasmoides genitalium).